A 201-amino-acid polypeptide reads, in one-letter code: 3-isopropylmalate dehydratase small subunit (201 aa).

This sequence belongs to the LeuD family. LeuD type 1 subfamily. As to quaternary structure, heterodimer of LeuC and LeuD.

It catalyses the reaction (2R,3S)-3-isopropylmalate = (2S)-2-isopropylmalate. It participates in amino-acid biosynthesis; L-leucine biosynthesis; L-leucine from 3-methyl-2-oxobutanoate: step 2/4. In terms of biological role, catalyzes the isomerization between 2-isopropylmalate and 3-isopropylmalate, via the formation of 2-isopropylmaleate. The protein is 3-isopropylmalate dehydratase small subunit of Shewanella denitrificans (strain OS217 / ATCC BAA-1090 / DSM 15013).